A 1233-amino-acid polypeptide reads, in one-letter code: Anion exchange protein 3 (1233 aa).

Positions 1-11 (MANGVIPPPGG) are enriched in pro residues. 2 disordered regions span residues 1–320 (MANG…RRPH) and 431–500 (DDKD…DGHR). The Cytoplasmic portion of the chain corresponds to 1 to 709 (MANGVIPPPG…DLRDALHSQC (709 aa)). Residues 58-73 (DPEKPSRSFSERDFAF) are compositionally biased toward basic and acidic residues. Basic residues-rich tracts occupy residues 74-97 (HRHI…KLRR) and 104-113 (RHTRRKRKKE). Residues 137-153 (GEEEEEEEEEGESETEA) show a composition bias toward acidic residues. Phosphoserine occurs at positions 168, 171, 176, and 199. Low complexity predominate over residues 201–216 (QRSVSSSSPRARAPRV). Over residues 268–290 (DDMKSHRLEDNPGVRRHLVKEPS) the composition is skewed to basic and acidic residues. Arg-296 carries the post-translational modification Omega-N-methylarginine. Over residues 437-450 (SFPRNPSSSSVNSV) the composition is skewed to low complexity. Over residues 482–500 (HDPDAKERPLHMPGGDGHR) the composition is skewed to basic and acidic residues. 4 helical membrane passes run 710–732 (VAAV…GLLG), 738–775 (LMGV…LLVF), 795–817 (VWVG…TFLV), and 827–848 (IFAF…YKVF). Residues 710 to 1233 (VAAVLFIYFA…DEYNELHMPV (524 aa)) are membrane (anion exchange). N-linked (GlcNAc...) asparagine glycosylation is present at Asn-874. The chain crosses the membrane as a helical span at residues 894–911 (ALLSLILMLGTFLIAFFL). The Cytoplasmic portion of the chain corresponds to 912 to 926 (RKFRNSRFLGGKARR). Helical transmembrane passes span 927-947 (IIGD…DYSI), 981-1003 (PFPP…LIFM), 1029-1050 (LLLI…LTAA), 1084-1129 (VTGV…IQLS), and 1156-1192 (MHLF…TVPL). A lipid anchor (S-palmitoyl cysteine) is attached at Cys-1166.

The protein belongs to the anion exchanger (TC 2.A.31) family.

It localises to the cell membrane. It carries out the reaction hydrogencarbonate(in) + chloride(out) = hydrogencarbonate(out) + chloride(in). Functionally, sodium-independent anion exchanger which mediates the electroneutral exchange of chloride for bicarbonate ions across the cell membrane. May be involved in the regulation of intracellular pH, and the modulation of cardiac action potential. The chain is Anion exchange protein 3 (SLC4A3) from Oryctolagus cuniculus (Rabbit).